A 1670-amino-acid polypeptide reads, in one-letter code: Hemolymph clottable protein (1670 aa).

Positions Met1–Ala14 are cleaved as a signal peptide. Residues Leu15–Tyr674 form a vittelogenin region. The region spanning Leu15–Leu764 is the Vitellogenin domain. Residue Asn106 is glycosylated (N-linked (GlcNAc...) asparagine). The segment covering Ser198–Ser231 has biased composition (low complexity). Positions Ser198–Ala236 are disordered. N-linked (GlcNAc...) asparagine glycans are attached at residues Asn319, Asn459, and Asn1301. In terms of domain architecture, VWFD spans Val1390–Ala1550. 2 disulfide bridges follow: Cys1392–Cys1513 and Cys1414–Cys1549.

Homodimer; disulfide-linked. Also exists as oligomers. Glycosylated. Contains mannose and N-acetylglucosamine. In terms of processing, substrate of transglutaminase. Widely expressed with highest levels in gill and heart. Not expressed in hemocytes.

It localises to the secreted. Its function is as follows. Forms stable clots in the presence of calcium. In Penaeus monodon (Giant tiger prawn), this protein is Hemolymph clottable protein.